Reading from the N-terminus, the 171-residue chain is Large ribosomal subunit protein bL9 (171 aa).

The protein belongs to the bacterial ribosomal protein bL9 family.

Functionally, binds to the 23S rRNA. The sequence is that of Large ribosomal subunit protein bL9 from Rickettsia peacockii (strain Rustic).